A 182-amino-acid polypeptide reads, in one-letter code: Dynactin subunit 5 (182 aa).

Methionine 1 carries the N-acetylmethionine modification.

Belongs to the dynactin subunits 5/6 family. Dynactin subunit 5 subfamily. Subunit of dynactin, a multiprotein complex part of a tripartite complex with dynein and a adapter, such as BICDL1, BICD2 or HOOK3. The dynactin complex is built around ACTR1A/ACTB filament and consists of an actin-related filament composed of a shoulder domain, a pointed end and a barbed end. Its length is defined by its flexible shoulder domain. The soulder is composed of 2 DCTN1 subunits, 4 DCTN2 and 2 DCTN3. The 4 DCNT2 (via N-terminus) bind the ACTR1A filament and act as molecular rulers to determine the length. The pointed end is important for binding dynein-dynactin cargo adapters. Consists of 4 subunits: ACTR10, DCNT4, DCTN5 and DCTN6. Within the complex DCTN6 forms a heterodimer with DCTN5. The barbed end is composed of a CAPZA1:CAPZB heterodimers, which binds ACTR1A/ACTB filament and dynactin and stabilizes dynactin. Interacts with N4BP2L1.

The protein resides in the cytoplasm. Its subcellular location is the cytoskeleton. The protein localises to the chromosome. It localises to the centromere. It is found in the kinetochore. Functionally, part of the dynactin complex that activates the molecular motor dynein for ultra-processive transport along microtubules. The protein is Dynactin subunit 5 of Homo sapiens (Human).